The chain runs to 753 residues: Centromere protein I (753 aa).

Residues 1 to 15 (MQRRQSSKHSKRPLQ) are compositionally biased toward basic residues. The segment at 1–54 (MQRRQSSKHSKRPLQVHHSNQTDLSAWRKGGTVDTEKSAQNRQSLSDQKNDNEQ) is disordered.

Belongs to the CENP-I/CTF3 family. In terms of assembly, component of the CENPA-HI complex, at least composed of CENPH, CENPI, CENPK, CENPL, CENPM, CENPO and CENPP.

Its subcellular location is the nucleus. It is found in the chromosome. It localises to the centromere. Functionally, component of the CENPA-HI complex, a centromeric complex involved in assembly of kinetochore proteins, mitotic progression and chromosome segregation. Required for the localization of CENPC but not CENPA to the centromere. It however may be involved in incorporation of newly synthesized CENPA into centromeres via its interaction with the CENPA-NAC complex. This chain is Centromere protein I (CENPI), found in Gallus gallus (Chicken).